We begin with the raw amino-acid sequence, 38 residues long: MKVRASVKKMCRNCKIIKRHGVVRIICSDEPKHKQRQG.

It belongs to the bacterial ribosomal protein bL36 family.

The sequence is that of Large ribosomal subunit protein bL36 from Hamiltonella defensa subsp. Acyrthosiphon pisum (strain 5AT).